The sequence spans 225 residues: Ribose-5-phosphate isomerase A (225 aa).

Residues 26–29, 82–85, and 95–98 contribute to the substrate site; these read TGST, DGAD, and KGGG. Glu104 serves as the catalytic Proton acceptor. Residue Lys122 coordinates substrate.

Belongs to the ribose 5-phosphate isomerase family. In terms of assembly, homodimer.

It catalyses the reaction aldehydo-D-ribose 5-phosphate = D-ribulose 5-phosphate. It functions in the pathway carbohydrate degradation; pentose phosphate pathway; D-ribose 5-phosphate from D-ribulose 5-phosphate (non-oxidative stage): step 1/1. Functionally, catalyzes the reversible conversion of ribose-5-phosphate to ribulose 5-phosphate. In Streptococcus gordonii (strain Challis / ATCC 35105 / BCRC 15272 / CH1 / DL1 / V288), this protein is Ribose-5-phosphate isomerase A.